The chain runs to 39 residues: Photosystem II reaction center protein J (39 aa).

The chain crosses the membrane as a helical span at residues 7–27 (IPLWLVATVAGMGVITLLGIF).

The protein belongs to the PsbJ family. As to quaternary structure, PSII is composed of 1 copy each of membrane proteins PsbA, PsbB, PsbC, PsbD, PsbE, PsbF, PsbH, PsbI, PsbJ, PsbK, PsbL, PsbM, PsbT, PsbX, PsbY, PsbZ, Psb30/Ycf12, peripheral proteins PsbO, CyanoQ (PsbQ), PsbU, PsbV and a large number of cofactors. It forms dimeric complexes.

The protein resides in the cellular thylakoid membrane. One of the components of the core complex of photosystem II (PSII). PSII is a light-driven water:plastoquinone oxidoreductase that uses light energy to abstract electrons from H(2)O, generating O(2) and a proton gradient subsequently used for ATP formation. It consists of a core antenna complex that captures photons, and an electron transfer chain that converts photonic excitation into a charge separation. The protein is Photosystem II reaction center protein J of Cyanothece sp. (strain PCC 7425 / ATCC 29141).